Reading from the N-terminus, the 1906-residue chain is Retinoic acid-induced protein 1 (1906 aa).

Disordered regions lie at residues 1–261, 273–299, 335–370, 469–520, 538–571, and 656–712; these read MQSF…APGQ, RLSY…RHHA, YQTF…LENF, VSRT…YLSG, SPAR…SDDS, and SAWP…GTKP. Polar residues predominate over residues 13–24; it reads KQQNYQQTSQET. Residues 66–75 show a composition bias toward low complexity; it reads PSGTAAAVAA. Pro residues predominate over residues 124–134; the sequence is PQPPPPQPQPL. The segment covering 213–226 has biased composition (low complexity); that stretch reads SQSFPTSSTYSSSV. Residues 252–261 are compositionally biased toward polar residues; the sequence is TASSSLAPGQ. 2 stretches are compositionally biased toward low complexity: residues 278–291 and 339–353; these read QQQQ…QQQQ and SPSS…VGRS. Ser339 and Ser345 each carry phosphoserine. Position 472 is a phosphothreonine (Thr472). Residues 541-563 show a composition bias toward polar residues; sequence RVNSNSKAKPESVSTCSVTSPDD. A phosphoserine mark is found at Ser568 and Ser683. The residue at position 696 (Thr696) is a Phosphothreonine. A Phosphoserine modification is found at Ser805. Lys811 is covalently cross-linked (Glycyl lysine isopeptide (Lys-Gly) (interchain with G-Cter in SUMO2)). Residue Lys819 forms a Glycyl lysine isopeptide (Lys-Gly) (interchain with G-Cter in SUMO1) linkage. A phosphoserine mark is found at Ser880 and Ser892. Lys901 participates in a covalent cross-link: Glycyl lysine isopeptide (Lys-Gly) (interchain with G-Cter in SUMO1); alternate. A Glycyl lysine isopeptide (Lys-Gly) (interchain with G-Cter in SUMO2); alternate cross-link involves residue Lys901. A compositionally biased stretch (polar residues) spans 937 to 947; that stretch reads KVQSWFESSLS. 5 disordered regions span residues 937–1299, 1344–1570, 1613–1637, 1746–1775, and 1794–1819; these read KVQS…ETPD, FACK…PLDP, VVNS…SSSS, AAAA…SARG, and EEAA…GGEA. Residues 950–962 are compositionally biased toward basic and acidic residues; sequence KPGEEGPDGERAP. Residues 996-1005 are compositionally biased toward basic residues; sequence KSLRSRRVHR. Ser1064 is subject to Phosphoserine. A Phosphothreonine modification is found at Thr1068. Low complexity predominate over residues 1101 to 1119; that stretch reads PSPKAASSPSNPAALPVAS. At Ser1122 the chain carries Phosphoserine. 2 short sequence motifs (nuclear localization signal) span residues 1160 to 1177 and 1223 to 1240; these read RRRP…TKKL and KRKS…RNLV. Over residues 1242–1252 the composition is skewed to low complexity; that stretch reads RSRSSSSSNAS. Ser1352, Ser1358, and Ser1374 each carry phosphoserine. Lys1425 participates in a covalent cross-link: Glycyl lysine isopeptide (Lys-Gly) (interchain with G-Cter in SUMO2). A Phosphoserine modification is found at Ser1431. Positions 1444–1453 are enriched in basic residues; sequence PKKRSRKGRA. Polar residues-rich tracts occupy residues 1482–1491 and 1517–1534; these read SGTQGASEDN and QPQT…YSSY. Over residues 1535-1545 the composition is skewed to basic residues; sequence SKRKRLTRGRA. Positions 1628–1637 are enriched in low complexity; it reads SSSASSSSSS. The C2HC pre-PHD-type zinc-finger motif lies at 1780–1835; the sequence is LQSCYCCDGREDGGEEAAPADKGRKHECSKEAPAEPGGEAQEHWVHEACAVWTGGV. A compositionally biased stretch (basic and acidic residues) spans 1798–1812; sequence PADKGRKHECSKEAP. The PHD-type zinc finger occupies 1855-1903; it reads MMCSSCQEAGATIGCCHKGCLHTYHYPCASDAGCIFIEENFSLKCPKHK.

As to expression, expressed in all tissues examined with higher expression in the heart and brain. No expression was seen in the corpus callosum of the brain.

The protein localises to the cytoplasm. It is found in the nucleus. Its function is as follows. Transcriptional regulator of the circadian clock components: CLOCK, BMAL1, BMAL2, PER1/3, CRY1/2, NR1D1/2 and RORA/C. Positively regulates the transcriptional activity of CLOCK a core component of the circadian clock. Regulates transcription through chromatin remodeling by interacting with other proteins in chromatin as well as proteins in the basic transcriptional machinery. May be important for embryonic and postnatal development. May be involved in neuronal differentiation. The protein is Retinoic acid-induced protein 1 (RAI1) of Homo sapiens (Human).